The following is a 339-amino-acid chain: MRDHTDEKSEAAGNDDGHVRIGGLPAFDPDDPAENAVINRLVGNWHRRAAVKREEPDVYALFDPGRPDFREDMIPFRGHPIWERLSDETRSRLLSWGWVAYNRNTVLIEQRIANPAFELVIGGAYPGLGGQQLELAVAQAMVDEQYHTLMHINGSAVTRRMRRSDFSDRVLPDSHITTIHQEHLDRCEEPWQRSLTTLGFATVAEISINAYLDLLADDQEIQVVNSTTVKLHNRDEYCHASISGEMMKQVYEALPADRRRFLLEKVVAGLEAFVAPDFTTWESIVAFEGVPGWEKAAAEVREAQGGTHLVQDHSGIHTLLTEMDVLDQVEFGWGTTVTR.

Basic and acidic residues predominate over residues 1-19 (MRDHTDEKSEAAGNDDGHV). Residues 1–22 (MRDHTDEKSEAAGNDDGHVRIG) form a disordered region. Positions 109, 144, 147, 205, 232, 236, and 239 each coordinate Fe cation.

It belongs to the AurF N-oxygenase family. It depends on Fe(2+) as a cofactor.

It carries out the reaction alpha-N-dichloroacetyl-p-aminophenylserinol + AH2 + 2 O2 = chloramphenicol + A + 2 H2O. It participates in antibiotic biosynthesis. In terms of biological role, involved in chloramphenicol biosynthesis. Catalyzes the six-electron oxidation of an aryl-amine precursor of chloramphenicol (NH2-CAM) to yield the aryl-nitro group of chloramphenicol (CAM). During catalysis, upon exposure of the diferrous cluster to O(2), ClmI forms an exceptionally long-lived peroxo intermediate (CmlI-peroxo), which reacts with NH2-CAM to form CAM. The polypeptide is Alpha-N-dichloroacetyl-p-aminophenylserinol N-oxygenase (Streptomyces venezuelae (strain ATCC 10712 / CBS 650.69 / DSM 40230 / JCM 4526 / NBRC 13096 / PD 04745)).